Reading from the N-terminus, the 143-residue chain is FAD synthase (143 aa).

ATP contacts are provided by residues 11 to 12 (TF), 16 to 19 (HPGH), and Asp94.

Belongs to the archaeal FAD synthase family. As to quaternary structure, homodimer. The cofactor is a divalent metal cation.

It catalyses the reaction FMN + ATP + H(+) = FAD + diphosphate. It participates in cofactor biosynthesis; FAD biosynthesis; FAD from FMN: step 1/1. Its function is as follows. Catalyzes the transfer of the AMP portion of ATP to flavin mononucleotide (FMN) to produce flavin adenine dinucleotide (FAD) coenzyme. The polypeptide is FAD synthase (Halomicrobium mukohataei (strain ATCC 700874 / DSM 12286 / JCM 9738 / NCIMB 13541) (Haloarcula mukohataei)).